A 153-amino-acid chain; its full sequence is Ribosome maturation factor RimP (153 aa).

This sequence belongs to the RimP family.

It is found in the cytoplasm. Required for maturation of 30S ribosomal subunits. The polypeptide is Ribosome maturation factor RimP (Histophilus somni (strain 2336) (Haemophilus somnus)).